Here is a 59-residue protein sequence, read N- to C-terminus: Large ribosomal subunit protein uL30 (59 aa).

The protein belongs to the universal ribosomal protein uL30 family. Part of the 50S ribosomal subunit.

The polypeptide is Large ribosomal subunit protein uL30 (Mycobacterium sp. (strain JLS)).